The chain runs to 407 residues: Argininosuccinate synthase (407 aa).

ATP contacts are provided by residues 16–24 and alanine 44; that span reads AYSGGLDTS. Positions 96 and 101 each coordinate L-citrulline. Glycine 126 contacts ATP. 3 residues coordinate L-aspartate: threonine 128, asparagine 132, and aspartate 133. Residue asparagine 132 coordinates L-citrulline. Positions 136, 185, 194, 270, and 282 each coordinate L-citrulline.

This sequence belongs to the argininosuccinate synthase family. Type 1 subfamily. Homotetramer.

The protein resides in the cytoplasm. The enzyme catalyses L-citrulline + L-aspartate + ATP = 2-(N(omega)-L-arginino)succinate + AMP + diphosphate + H(+). It functions in the pathway amino-acid biosynthesis; L-arginine biosynthesis; L-arginine from L-ornithine and carbamoyl phosphate: step 2/3. This Shewanella sediminis (strain HAW-EB3) protein is Argininosuccinate synthase.